We begin with the raw amino-acid sequence, 412 residues long: WW domain-containing oxidoreductase (412 aa).

The disordered stretch occupies residues 1-24 (MAALKYAGMEDTDSEDELPPGWEE). Residues 16 to 49 (DELPPGWEERSTKDGWVYYANHEEMKTQWEHPKT) form the WW 1 domain. The Nuclear localization signal signature appears at 50–55 (GKKKRC). Residues 57 to 90 (GALPYGWEQETDDKGQIFYVDHINKRKTYFDPRQ) form the WW 2 domain. 128–134 (GANSGIG) is an NADP(+) binding site. Residue Ser257 coordinates substrate. The active-site Proton acceptor is the Tyr290.

Belongs to the short-chain dehydrogenases/reductases (SDR) family.

It localises to the cytoplasm. The protein resides in the mitochondrion. The protein localises to the golgi apparatus. Its subcellular location is the lysosome. Its function is as follows. Putative oxidoreductase. Acts as a tumor suppressor and plays a role in apoptosis. May function synergistically with p53/TP53 to control genotoxic stress-induced cell death. Plays a role in TGFB1 signaling and TGFB1-mediated cell death. May also play a role in tumor necrosis factor (TNF)-mediated cell death. Required for normal bone development. Inhibits Wnt signaling. This is WW domain-containing oxidoreductase (wwox) from Danio rerio (Zebrafish).